The sequence spans 195 residues: Transcriptional regulator GfcR (195 aa).

The protein belongs to the purine/pyrimidine phosphoribosyltransferase family. GfcR subfamily.

This chain is Transcriptional regulator GfcR, found in Archaeoglobus fulgidus (strain ATCC 49558 / DSM 4304 / JCM 9628 / NBRC 100126 / VC-16).